Consider the following 229-residue polypeptide: Uracil-DNA glycosylase (229 aa).

The Proton acceptor role is filled by Asp70.

This sequence belongs to the uracil-DNA glycosylase (UDG) superfamily. UNG family.

The protein localises to the cytoplasm. It catalyses the reaction Hydrolyzes single-stranded DNA or mismatched double-stranded DNA and polynucleotides, releasing free uracil.. Functionally, excises uracil residues from the DNA which can arise as a result of misincorporation of dUMP residues by DNA polymerase or due to deamination of cytosine. The protein is Uracil-DNA glycosylase of Chlamydia abortus (strain DSM 27085 / S26/3) (Chlamydophila abortus).